The following is a 331-amino-acid chain: MKEFIVNAINYDKKIVTTAIESGADYIIIPEDKEEEAKKLGRVNFIIADKKGNLTDDFVIVTIKNKQDEEKAAQLAKAGKKVIVRTTDWTIIPLENLIAQSENIYAEVKNADEASIAVGILEKGVKGVVLETEDLNEIKRVASVIKETTEKVELIRAKVTAIIPVGMGDRVAVDTTSLFKRGEGMLVGNSSAGMILVHAETEESPYVASRPFRVNAGAVHMYTRVPGGKTVYLCELEAGKEVMAYDIDGNGRAVVVGRAKIERRPMLLIEAEYNGKKLSAVLQNAETIRVVGGDGSLISVVDLKEGDEILGYVEEAGRHFGMKVEETILEK.

It belongs to the archaeal-type DHQ synthase family.

The protein is 3-dehydroquinate synthase homolog of Persephonella marina (strain DSM 14350 / EX-H1).